Here is a 147-residue protein sequence, read N- to C-terminus: Protein-export protein SecB 2 (147 aa).

This sequence belongs to the SecB family. Homotetramer, a dimer of dimers. One homotetramer interacts with 1 SecA dimer.

It localises to the cytoplasm. Its function is as follows. One of the proteins required for the normal export of preproteins out of the cell cytoplasm. It is a molecular chaperone that binds to a subset of precursor proteins, maintaining them in a translocation-competent state. It also specifically binds to its receptor SecA. In Francisella tularensis subsp. novicida (strain U112), this protein is Protein-export protein SecB 2.